The sequence spans 320 residues: ATP-dependent 6-phosphofructokinase (320 aa).

G12 contributes to the ATP binding site. 22 to 26 contacts ADP; sequence RSVIR. Residues 73 to 74 and 103 to 106 contribute to the ATP site; these read RF and GDGS. D104 contacts Mg(2+). Residue 126–128 coordinates substrate; the sequence is TID. D128 functions as the Proton acceptor in the catalytic mechanism. ADP is bound at residue R155. Residues R163 and 170–172 contribute to the substrate site; that span reads MGR. Residues 186-188 and 214-216 contribute to the ADP site; these read GAE and KRH. Substrate-binding positions include E223, R244, and 250–253; that span reads HIQR.

This sequence belongs to the phosphofructokinase type A (PFKA) family. ATP-dependent PFK group I subfamily. Prokaryotic clade 'B1' sub-subfamily. In terms of assembly, homotetramer. It depends on Mg(2+) as a cofactor.

The protein resides in the cytoplasm. The catalysed reaction is beta-D-fructose 6-phosphate + ATP = beta-D-fructose 1,6-bisphosphate + ADP + H(+). It participates in carbohydrate degradation; glycolysis; D-glyceraldehyde 3-phosphate and glycerone phosphate from D-glucose: step 3/4. With respect to regulation, allosterically activated by ADP and other diphosphonucleosides, and allosterically inhibited by phosphoenolpyruvate. Catalyzes the phosphorylation of D-fructose 6-phosphate to fructose 1,6-bisphosphate by ATP, the first committing step of glycolysis. This is ATP-dependent 6-phosphofructokinase from Tolumonas auensis (strain DSM 9187 / NBRC 110442 / TA 4).